The sequence spans 375 residues: Erythronate-4-phosphate dehydrogenase (375 aa).

2 residues coordinate substrate: S45 and T66. NAD(+) is bound by residues D146 and T175. R208 is an active-site residue. NAD(+) is bound at residue D232. Residue E237 is part of the active site. Catalysis depends on H254, which acts as the Proton donor. An NAD(+)-binding site is contributed by G257. Y258 is a substrate binding site.

This sequence belongs to the D-isomer specific 2-hydroxyacid dehydrogenase family. PdxB subfamily. Homodimer.

The protein resides in the cytoplasm. It carries out the reaction 4-phospho-D-erythronate + NAD(+) = (R)-3-hydroxy-2-oxo-4-phosphooxybutanoate + NADH + H(+). It functions in the pathway cofactor biosynthesis; pyridoxine 5'-phosphate biosynthesis; pyridoxine 5'-phosphate from D-erythrose 4-phosphate: step 2/5. In terms of biological role, catalyzes the oxidation of erythronate-4-phosphate to 3-hydroxy-2-oxo-4-phosphonooxybutanoate. The protein is Erythronate-4-phosphate dehydrogenase of Edwardsiella ictaluri (strain 93-146).